Reading from the N-terminus, the 357-residue chain is 39 kDa FK506-binding nuclear protein (357 aa).

S92 carries the phosphoserine modification. The tract at residues 113–251 (KNSKKSEDDE…ASKDPRTITG (139 aa)) is disordered. Over residues 120–182 (DDEDENESGE…QDSDDSEAEE (63 aa)) the composition is skewed to acidic residues. Phosphoserine occurs at positions 193 and 197. Residues 222–237 (EKPEAKKEQPKAKEPA) show a composition bias toward basic and acidic residues. The PPIase FKBP-type domain maps to 269–357 (GKRVSVYYIG…VFEVELKAVH (89 aa)).

It belongs to the FKBP-type PPIase family. Ubiquitously expressed, highest levels in ovary.

The protein localises to the nucleus. It carries out the reaction [protein]-peptidylproline (omega=180) = [protein]-peptidylproline (omega=0). Its function is as follows. PPIases accelerate the folding of proteins. May function in a signal transduction cascade during early development. The chain is 39 kDa FK506-binding nuclear protein from Drosophila melanogaster (Fruit fly).